We begin with the raw amino-acid sequence, 884 residues long: Ubiquitin carboxyl-terminal hydrolase 20 (884 aa).

The segment at 6 to 109 adopts a UBP-type zinc-finger fold; that stretch reads DFCPHLDSIG…SQTTSPRLSH (104 aa). Cys-8, His-10, Cys-30, Cys-33, Cys-43, Cys-48, Cys-53, His-60, His-64, His-70, Cys-83, and Cys-86 together coordinate Zn(2+). Residues 95–142 form a disordered region; that stretch reads RGPPASQTTSPRLSHRDFPTSAHPLKSVPIAVGDDGESESDEDDIKPR. Acidic residues predominate over residues 128–138; sequence DDGESESDEDD. The USP domain occupies 145 to 655; sequence TGMKNIGNSC…EAYVLFYRKS (511 aa). Cys-154 (nucleophile) is an active-site residue. 2 disordered regions span residues 247 to 296 and 368 to 388; these read LKEP…GGGG and HPVE…PLRT. Residues 264–274 show a composition bias toward basic and acidic residues; it reads DDQREGERGGT. Positions 286–296 are enriched in gly residues; it reads GEMGDGEGGGG. Residues 376–388 are compositionally biased toward low complexity; it reads HSSTPPRSSPLRT. His-613 functions as the Proton acceptor in the catalytic mechanism. 2 consecutive DUSP domains span residues 657-750 and 759-862; these read EEAE…LYVC and ALAK…RQTV.

The protein belongs to the peptidase C19 family. USP20/USP33 subfamily.

The protein resides in the cytoplasm. It is found in the perinuclear region. Its subcellular location is the cytoskeleton. The protein localises to the microtubule organizing center. It localises to the centrosome. It catalyses the reaction Thiol-dependent hydrolysis of ester, thioester, amide, peptide and isopeptide bonds formed by the C-terminal Gly of ubiquitin (a 76-residue protein attached to proteins as an intracellular targeting signal).. In terms of biological role, deubiquitinating enzyme involved in beta-2 adrenergic receptor (adrb2) recycling. Acts as a regulator of G-protein coupled receptor (GPCR) signaling by mediating the deubiquitination beta-2 adrenergic receptor (adrb2). Plays a central role in adrb2 recycling and resensitization after prolonged agonist stimulation by constitutively binding adrb2, mediating deubiquitination of adrb2 and inhibiting lysosomal trafficking of adrb2. Mediates deubiquitination of both 'Lys-48'- and 'Lys-63'-linked polyubiquitin chains. The sequence is that of Ubiquitin carboxyl-terminal hydrolase 20 (usp20) from Xenopus tropicalis (Western clawed frog).